Here is a 104-residue protein sequence, read N- to C-terminus: Small ribosomal subunit protein uS10 (104 aa).

The protein belongs to the universal ribosomal protein uS10 family. In terms of assembly, part of the 30S ribosomal subunit.

Involved in the binding of tRNA to the ribosomes. This chain is Small ribosomal subunit protein uS10, found in Helicobacter pylori (strain P12).